We begin with the raw amino-acid sequence, 223 residues long: Deoxyribose-phosphate aldolase (223 aa).

The active-site Proton donor/acceptor is the Asp-89. The Schiff-base intermediate with acetaldehyde role is filled by Lys-152. The Proton donor/acceptor role is filled by Lys-181.

It belongs to the DeoC/FbaB aldolase family. DeoC type 1 subfamily.

Its subcellular location is the cytoplasm. It carries out the reaction 2-deoxy-D-ribose 5-phosphate = D-glyceraldehyde 3-phosphate + acetaldehyde. Its pathway is carbohydrate degradation; 2-deoxy-D-ribose 1-phosphate degradation; D-glyceraldehyde 3-phosphate and acetaldehyde from 2-deoxy-alpha-D-ribose 1-phosphate: step 2/2. In terms of biological role, catalyzes a reversible aldol reaction between acetaldehyde and D-glyceraldehyde 3-phosphate to generate 2-deoxy-D-ribose 5-phosphate. This Listeria monocytogenes serovar 1/2a (strain ATCC BAA-679 / EGD-e) protein is Deoxyribose-phosphate aldolase.